Here is a 422-residue protein sequence, read N- to C-terminus: MSDMFRKSVLNKLPHLPPTRAPWADESEPIEEIDEEDEQLDGIGEFKPATMGPSKHDTQDYSPLSASTFFAQAAEVQPPSTPCTFRVYLTPPNLSIASTNAGTPPGPSGLRTQQQTNRHGTYLVCHHGGGASGLGFAPLAREVKAKGNGEMGVLAFDCRGHGKTSTSDPNLELDLSHDTLLSDFMAIIEMMFPDPKESPSLILLGHSMGAAPVVSAAPELQKKGYTIPGVVVLDVVEGTAVESLPLMKSVLSKRPESFRSVIDAIYWHVTSNSIRNVESARVSVPHIIVPAPSSSSSDPSANPGGKQVWRTNLVGTEPYWEGWYKGLSQRFLRTKCARLLVLAGQERLDRELMVGQMQGKFQLEVMSDVGHYLHEDNPAGLAATLITFWHRNTRVLVLPPKIGAPGPGARGGPVEVKQVGQQ.

The interval 1-27 is disordered; sequence MSDMFRKSVLNKLPHLPPTRAPWADES. Residues S207, D234, and H371 contribute to the active site.

It belongs to the AB hydrolase superfamily.

The catalysed reaction is [phosphatase 2A protein]-C-terminal L-leucine methyl ester + H2O = [phosphatase 2A protein]-C-terminal L-leucine + methanol + H(+). Its function is as follows. Demethylates proteins that have been reversibly carboxymethylated. Demethylates the phosphatase PP2A catalytic subunit. This chain is Protein phosphatase methylesterase 1 (PPE1), found in Cryptococcus neoformans var. neoformans serotype D (strain B-3501A) (Filobasidiella neoformans).